The sequence spans 248 residues: 2,3-bisphosphoglycerate-dependent phosphoglycerate mutase (248 aa).

Substrate contacts are provided by residues 8–15 (RHGESTWN), 21–22 (TG), arginine 60, 87–90 (ERHY), lysine 98, 114–115 (RR), and 183–184 (GN). Catalysis depends on histidine 9, which acts as the Tele-phosphohistidine intermediate. Glutamate 87 acts as the Proton donor/acceptor in catalysis.

It belongs to the phosphoglycerate mutase family. BPG-dependent PGAM subfamily. In terms of assembly, homodimer.

It catalyses the reaction (2R)-2-phosphoglycerate = (2R)-3-phosphoglycerate. It participates in carbohydrate degradation; glycolysis; pyruvate from D-glyceraldehyde 3-phosphate: step 3/5. In terms of biological role, catalyzes the interconversion of 2-phosphoglycerate and 3-phosphoglycerate. The sequence is that of 2,3-bisphosphoglycerate-dependent phosphoglycerate mutase from Paraburkholderia phytofirmans (strain DSM 17436 / LMG 22146 / PsJN) (Burkholderia phytofirmans).